Reading from the N-terminus, the 187-residue chain is uncharacterized protein (187 aa).

An N-terminal signal peptide occupies residues 1–28; that stretch reads MRLHRTNNSRRCTILLILALKIFDFVDT. N-linked (GlcNAc...) asparagine glycosylation is found at Asn-58, Asn-70, Asn-156, and Asn-168.

Its subcellular location is the secreted. This is an uncharacterized protein from Caenorhabditis elegans.